Consider the following 1988-residue polypeptide: Sodium channel protein type 9 subunit alpha (1988 aa).

The Cytoplasmic segment spans residues Met-1 to His-125. Basic and acidic residues predominate over residues Arg-26 to Lys-39. The disordered stretch occupies residues Arg-26–Ala-55. One copy of the I repeat lies at Phe-112–Gln-410. The chain crosses the membrane as a helical span at residues Ser-126–Met-145. Over Asn-146–Asp-150 the chain is Extracellular. The chain crosses the membrane as a helical span at residues Trp-151 to Leu-172. Residues Ala-173 to Arg-185 are Cytoplasmic-facing. A helical membrane pass occupies residues Asp-186–Phe-204. The Extracellular segment spans residues Val-205 to Val-210. Residue Asn-209 is glycosylated (N-linked (GlcNAc...) asparagine). A helical membrane pass occupies residues Ser-211–Val-227. Residues Ile-228–Ser-241 lie on the Cytoplasmic side of the membrane. Residues Val-242–Phe-267 form a helical membrane-spanning segment. Topologically, residues Met-268–Thr-346 are extracellular. A disulfide bridge links Cys-275 with Cys-324. A glycan (N-linked (GlcNAc...) asparagine) is linked at Asn-283. Positions Phe-347–Trp-363 form an intramembrane region, pore-forming. Over Glu-364–Lys-376 the chain is Extracellular. The helical transmembrane segment at Thr-377–Ala-402 threads the bilayer. At Met-403–Phe-745 the chain is on the cytoplasmic side. Residues Ser-461–Lys-471 are compositionally biased toward low complexity. Disordered stretches follow at residues Ser-461–Leu-543 and Gly-565–Met-611. The segment covering Lys-474–Lys-486 has biased composition (basic residues). Basic and acidic residues-rich tracts occupy residues Ser-489–Arg-510 and Asp-573–Arg-585. An II repeat occupies Cys-726–Gln-989. The helical transmembrane segment at Val-746 to Ala-762 threads the bilayer. Residues Met-763–Glu-771 lie on the Extracellular side of the membrane. The helical transmembrane segment at Phe-772 to Ile-796 threads the bilayer. The Cytoplasmic segment spans residues Ala-797–Gln-805. The chain crosses the membrane as a helical span at residues Val-806 to Glu-822. Topologically, residues Leu-823 to Leu-831 are extracellular. A helical transmembrane segment spans residues Ser-832–Ser-848. Topologically, residues Trp-849–Ala-865 are cytoplasmic. A helical membrane pass occupies residues Leu-866 to Phe-888. The Extracellular segment spans residues Gly-889–His-915. A disulfide bridge connects residues Cys-897 and Cys-903. Positions Ser-916–Trp-928 form an intramembrane region, pore-forming. Residues Ile-929–Gly-940 lie on the Extracellular side of the membrane. Cysteines 935 and 944 form a disulfide. A helical membrane pass occupies residues Gln-941–Leu-967. The Cytoplasmic portion of the chain corresponds to Leu-968–Lys-1187. A disordered region spans residues Asn-1102 to Ser-1148. Over residues Asn-1120–Asp-1131 the composition is skewed to polar residues. Acidic residues predominate over residues Glu-1137–Ser-1148. The III repeat unit spans residues Asn-1180–Leu-1488. The helical transmembrane segment at Ile-1188–Glu-1212 threads the bilayer. At Asp-1213–Ile-1224 the chain is on the extracellular side. A helical transmembrane segment spans residues Ile-1225–Tyr-1250. Residues Lys-1251–Thr-1252 lie on the Cytoplasmic side of the membrane. A helical transmembrane segment spans residues Tyr-1253 to Leu-1278. The Extracellular portion of the chain corresponds to Gly-1279–Lys-1287. The chain crosses the membrane as a helical span at residues Ser-1288 to Phe-1304. The Cytoplasmic segment spans residues Glu-1305–Ala-1317. The helical transmembrane segment at Ile-1318–Leu-1342 threads the bilayer. Topologically, residues Phe-1343–Leu-1394 are extracellular. Residues Cys-1350 and Cys-1370 are joined by a disulfide bond. N-linked (GlcNAc...) asparagine glycosylation is found at Asn-1352, Asn-1366, and Asn-1375. Positions Gly-1395–Phe-1405 form an intramembrane region, pore-forming. Residues Lys-1406–Leu-1431 lie on the Extracellular side of the membrane. The chain crosses the membrane as a helical span at residues Tyr-1432–Ile-1457. Topologically, residues Asp-1458–Asn-1514 are cytoplasmic. Ser-1490 bears the Phosphoserine; by PKC mark. One copy of the IV repeat lies at Ile-1497–Gln-1795. The chain crosses the membrane as a helical span at residues Gln-1515 to Val-1534. Topologically, residues Glu-1535–Glu-1545 are extracellular. Residues Val-1546 to Ile-1567 form a helical membrane-spanning segment. Over Ser-1568–Val-1576 the chain is Cytoplasmic. A helical membrane pass occupies residues Gly-1577–Leu-1598. At Ile-1599–Thr-1607 the chain is on the extracellular side. Residues Leu-1608–Ala-1627 traverse the membrane as a helical segment. Residues Lys-1628–Ser-1640 lie on the Cytoplasmic side of the membrane. Residues Leu-1641–Met-1663 form a helical membrane-spanning segment. The Extracellular segment spans residues Ser-1664–Asn-1686. The segment at residues Ser-1687 to Gly-1699 is an intramembrane region (pore-forming). Residues Trp-1700 to Pro-1733 lie on the Extracellular side of the membrane. Cys-1715 and Cys-1730 form a disulfide bridge. Residues Ser-1734–Ile-1759 traverse the membrane as a helical segment. Over Leu-1760 to Lys-1988 the chain is Cytoplasmic. The IQ domain occupies Glu-1889–Lys-1918. Positions Phe-1934–Lys-1988 are disordered. Positions Ala-1948–Val-1961 are enriched in low complexity. Residues Thr-1962–Lys-1988 show a composition bias toward basic and acidic residues.

It belongs to the sodium channel (TC 1.A.1.10) family. Nav1.7/SCN9A subfamily. In terms of assembly, the Nav1.7 voltage-gated sodium channel consists of an ion-conducting alpha subunit SCN9A which is functional on its own regulated by one or more beta-1 (SCN1B), beta-2 (SCN2B), beta-3 (SCN3B) and beta-4 (SCN4B) subunits. SCN1B and SCN3B are non-covalently associated with SCN9A. SCN2B and SCN4B are disulfide-linked to SCN9A. SCN1B regulates channel inactivation. Interacts with NEDD4 and NEDD4L; regulates Nav1.7 activity most probably through ubiquitination and subsequent endocytosis. Interacts with TMEM233; modulates the gating properties of NaV1.7. Post-translationally, phosphorylation at Ser-1490 by PKC in a highly conserved cytoplasmic loop increases peak sodium currents. Ubiquitinated by NEDD4L; which may promote its endocytosis. As to expression, expressed strongly in dorsal root ganglion, with only minor levels elsewhere in the body, smooth muscle cells, MTC cell line and C-cell carcinoma. Also expressed in vagus nerves within the head and neck region. Isoform 1 is expressed preferentially in the central and peripheral nervous system. Isoform 2 is expressed preferentially in the dorsal root ganglion.

Its subcellular location is the cell membrane. It is found in the cell projection. The protein localises to the neuron projection. The protein resides in the axon. The enzyme catalyses Na(+)(in) = Na(+)(out). Inhibited by tetrodotoxin. Weakly inhibited by saxitoxin. Inhibited by the spider huwentoxin-IV that binds the extracellular loop S3-S4 of repeat II. Inhibited by the spider protoxin-II that binds the extracellular loop S3-S4 of repeats II and IV. Inhibited by the scorpion alpha-toxins CvIV4 and AaH2. Inhibited by the conotoxin GVIIJ. Inhibited by the spider beta/delta-theraphotoxin-Pre1a. Pore-forming subunit of Nav1.7, a voltage-gated sodium (Nav) channel that directly mediates the depolarizing phase of action potentials in excitable membranes. Navs, also called VGSCs (voltage-gated sodium channels) or VDSCs (voltage-dependent sodium channels), operate by switching between closed and open conformations depending on the voltage difference across the membrane. In the open conformation they allow Na(+) ions to selectively pass through the pore, along their electrochemical gradient. The influx of Na(+) ions provokes membrane depolarization, initiating the propagation of electrical signals throughout cells and tissues. Nav1.7 plays a crucial role in controlling the excitability and action potential propagation from nociceptor neurons, thereby contributing to the sensory perception of pain. The polypeptide is Sodium channel protein type 9 subunit alpha (Homo sapiens (Human)).